The chain runs to 303 residues: D-alanine--D-alanine ligase (303 aa).

In terms of domain architecture, ATP-grasp spans Arg-102–Arg-298. Position 128–181 (Pro-128–Thr-181) interacts with ATP. Positions 251, 265, and 267 each coordinate Mg(2+).

It belongs to the D-alanine--D-alanine ligase family. Mg(2+) is required as a cofactor. The cofactor is Mn(2+).

The protein resides in the cytoplasm. The catalysed reaction is 2 D-alanine + ATP = D-alanyl-D-alanine + ADP + phosphate + H(+). It functions in the pathway cell wall biogenesis; peptidoglycan biosynthesis. Cell wall formation. The polypeptide is D-alanine--D-alanine ligase (Gluconobacter oxydans (strain 621H) (Gluconobacter suboxydans)).